The chain runs to 528 residues: Purine-cytosine permease FCY21 (528 aa).

The Cytoplasmic portion of the chain corresponds to 1–90 (MPQTHEMSLN…DDSILNAASM (90 aa)). A Phosphoserine modification is found at S43. Phosphothreonine is present on T46. A helical membrane pass occupies residues 91 to 111 (WFSANMVLPAYAIGALGPMVF). Topologically, residues 112-118 (DLNFGQS) are extracellular. A helical membrane pass occupies residues 119-139 (VFVIIFFNLLGLVSVAFFSVF). Topologically, residues 140–161 (GAELGLRQMILSRYLVGNIAAR) are cytoplasmic. A helical transmembrane segment spans residues 162-182 (IFSFINFIACIGWGIVNTVAS). At 183 to 198 (SQVLNMVNPGHQCPLW) the chain is on the extracellular side. Residues 199–219 (AGCIVIIGATVIVTFFGYGVI) traverse the membrane as a helical segment. The Cytoplasmic segment spans residues 220-221 (HA). Residues 222-242 (YEKWAWVPNFAVFLVIIARLA) form a helical membrane-spanning segment. Topologically, residues 243-260 (RSKKFVLGEWTSGPTTAG) are extracellular. Residues 261–281 (NVLSFGSTVYGFAAGWTTYAA) traverse the membrane as a helical segment. Over 282–295 (DYTVYMPRKTNKYK) the chain is Cytoplasmic. A helical transmembrane segment spans residues 296-316 (IFFSLVVGLATPLYFTMILGA). At 317-340 (AVAMAAIGDPAWKTYYDENSIGGL) the chain is on the extracellular side. Residues 341 to 361 (TFAVLVPNSVHGFGQFCCVLL) form a helical membrane-spanning segment. At 362–393 (SLSTIANNVPNMYTIALSVQATWEPLAKVPRV) the chain is on the cytoplasmic side. Residues 394-414 (IWTLLGNAAALGIAIPACYYF) form a helical membrane-spanning segment. Residues 415-416 (ST) are Extracellular-facing. The helical transmembrane segment at 417-437 (FMNYFMDSIGYYLAIYIAIAC) threads the bilayer. The Cytoplasmic segment spans residues 438–460 (SEHFIYRRSFSAYNVDDWDSWER). Residues 461–481 (LPIGIAGTAALIVGAFGVALG) traverse the membrane as a helical segment. Residues 482 to 493 (MCQTYWVGEISR) lie on the Extracellular side of the membrane. A helical transmembrane segment spans residues 494–514 (LIGDYGGDIGFELGLSWAFIV). The Cytoplasmic portion of the chain corresponds to 515–528 (YNIARPFELKYFGR).

This sequence belongs to the purine-cytosine permease (2.A.39) family.

Its subcellular location is the membrane. Probable purine-cytosine permease. This is Purine-cytosine permease FCY21 (FCY21) from Saccharomyces cerevisiae (strain ATCC 204508 / S288c) (Baker's yeast).